The sequence spans 290 residues: Ribosomal RNA small subunit methyltransferase A (290 aa).

Positions 27, 29, 54, 75, 100, and 125 each coordinate S-adenosyl-L-methionine.

The protein belongs to the class I-like SAM-binding methyltransferase superfamily. rRNA adenine N(6)-methyltransferase family. RsmA subfamily.

The protein resides in the cytoplasm. The enzyme catalyses adenosine(1518)/adenosine(1519) in 16S rRNA + 4 S-adenosyl-L-methionine = N(6)-dimethyladenosine(1518)/N(6)-dimethyladenosine(1519) in 16S rRNA + 4 S-adenosyl-L-homocysteine + 4 H(+). Functionally, specifically dimethylates two adjacent adenosines (A1518 and A1519) in the loop of a conserved hairpin near the 3'-end of 16S rRNA in the 30S particle. May play a critical role in biogenesis of 30S subunits. This chain is Ribosomal RNA small subunit methyltransferase A, found in Streptococcus pneumoniae (strain Hungary19A-6).